Consider the following 354-residue polypeptide: Uroporphyrinogen decarboxylase (354 aa).

Substrate-binding positions include 27-31, aspartate 77, tyrosine 154, threonine 209, and histidine 327; that span reads RQAGR.

This sequence belongs to the uroporphyrinogen decarboxylase family. As to quaternary structure, homodimer.

The protein resides in the cytoplasm. The catalysed reaction is uroporphyrinogen III + 4 H(+) = coproporphyrinogen III + 4 CO2. Its pathway is porphyrin-containing compound metabolism; protoporphyrin-IX biosynthesis; coproporphyrinogen-III from 5-aminolevulinate: step 4/4. In terms of biological role, catalyzes the decarboxylation of four acetate groups of uroporphyrinogen-III to yield coproporphyrinogen-III. The chain is Uroporphyrinogen decarboxylase from Actinobacillus succinogenes (strain ATCC 55618 / DSM 22257 / CCUG 43843 / 130Z).